We begin with the raw amino-acid sequence, 176 residues long: Protein tyrosine phosphatase PRL-1 (176 aa).

The region spanning 13-165 (GESDAVVFRF…YKPRHQEGNE (153 aa)) is the Tyrosine-protein phosphatase domain. Residues cysteine 52 and cysteine 107 are joined by a disulfide bond. Aspartate 75 functions as the Proton donor in the catalytic mechanism. Residue cysteine 107 is the Phosphocysteine intermediate of the active site. Substrate is bound at residue 109–113 (AGLGR). Cysteine 173 carries the cysteine methyl ester modification. Cysteine 173 carries the S-farnesyl cysteine lipid modification. Positions 174–176 (AVM) are cleaved as a propeptide — removed in mature form.

Belongs to the protein-tyrosine phosphatase family.

Its subcellular location is the flagellar pocket. It carries out the reaction O-phospho-L-tyrosyl-[protein] + H2O = L-tyrosyl-[protein] + phosphate. With respect to regulation, activated in a reduced environment which promotes the reduction of the disulfide bond between the regulatory Cys-52 and the catalytic Cys-107 residues. Inhibited by sodium orthovanadate. Its function is as follows. Has protein tyrosine phosphatase activity. The chain is Protein tyrosine phosphatase PRL-1 from Trypanosoma cruzi (strain CL Brener).